The primary structure comprises 344 residues: Krueppel-like factor 3 (344 aa).

The repressor domain stretch occupies residues 1–74 (MLMFDPVPVK…TVNKRGSPPA (74 aa)). Lys10 participates in a covalent cross-link: Glycyl lysine isopeptide (Lys-Gly) (interchain with G-Cter in SUMO). A 9aaTAD; inactive motif is present at residues 60–68 (EPVDLTVNK). The CTBP-binding motif motif lies at 61-65 (PVDLT). The segment at 66–111 (VNKRGSPPAAGGSPSSLKFPSHRRASPGLSMPSSSPPIKKYSPPSP) is disordered. Lys68 is covalently cross-linked (Glycyl lysine isopeptide (Lys-Gly) (interchain with G-Cter in SUMO2)). 2 stretches are compositionally biased toward low complexity: residues 70 to 81 (GSPPAAGGSPSS) and 91 to 107 (SPGLSMPSSSPPIKKYS). A phosphoserine mark is found at Ser71, Ser91, Ser100, Ser107, and Ser110. Lys195 is covalently cross-linked (Glycyl lysine isopeptide (Lys-Gly) (interchain with G-Cter in SUMO2)). Lys197 is covalently cross-linked (Glycyl lysine isopeptide (Lys-Gly) (interchain with G-Cter in SUMO); alternate). Lys197 participates in a covalent cross-link: Glycyl lysine isopeptide (Lys-Gly) (interchain with G-Cter in SUMO2); alternate. Phosphoserine is present on residues Ser215, Ser223, and Ser249. The segment at 235 to 254 (SVIVQPGKRPLPVESPDTQR) is disordered. 3 consecutive C2H2-type zinc fingers follow at residues 259–283 (HRCDYDGCNKVYTKSSHLKAHRRTH), 289–313 (YKCTWEGCTWKFARSDELTRHFRKH), and 319–341 (FQCPDCDRSFSRSDHLALHRKRH).

This sequence belongs to the krueppel C2H2-type zinc-finger protein family. In terms of assembly, monomer. Sumoylated with SUMO1. Sumoylation is enhanced by PIAS1, PIAS2alpha and PIAS2beta, and PIAS4, but not by Pc2. Enhances transcriptional repression, but has no effect on DNA binding. Sumoylation on Lys-197 is the major site. In 8.5 day embryos, expressed in midbrain, anterior hindbrain and ventral forebrain. In 9 day embryos, expressed throughout ventral anterior half of embryo including midbrain-hindbrain junction, ventral midbrain, diencephalon and forebrain. At 10.5 days, distribution is more widespread with expression also found in developing limb buds. Widely expressed in the adult.

It is found in the nucleus. Its function is as follows. Binds to the CACCC box of erythroid cell-expressed genes. May play a role in hematopoiesis. This is Krueppel-like factor 3 (Klf3) from Mus musculus (Mouse).